A 241-amino-acid chain; its full sequence is Small ribosomal subunit protein uS2 (241 aa).

It belongs to the universal ribosomal protein uS2 family.

The sequence is that of Small ribosomal subunit protein uS2 from Erwinia tasmaniensis (strain DSM 17950 / CFBP 7177 / CIP 109463 / NCPPB 4357 / Et1/99).